The following is a 319-amino-acid chain: Nucleotide-binding protein Mvan_2698 (319 aa).

Residues 1-12 show a composition bias toward basic and acidic residues; sequence MTEQGMHQELRE. Positions 1–26 are disordered; sequence MTEQGMHQELREGAGTAGDEGGLEAA. Residue 43 to 50 coordinates ATP; the sequence is GLSGAGRG. 94–97 provides a ligand contact to GTP; that stretch reads DVRS.

Belongs to the RapZ-like family.

Its function is as follows. Displays ATPase and GTPase activities. This is Nucleotide-binding protein Mvan_2698 from Mycolicibacterium vanbaalenii (strain DSM 7251 / JCM 13017 / BCRC 16820 / KCTC 9966 / NRRL B-24157 / PYR-1) (Mycobacterium vanbaalenii).